The sequence spans 349 residues: Homeobox-leucine zipper protein HOX7 (349 aa).

The segment at 42-186 (RATRRDEQDD…PKQKSDLANR (145 aa)) is disordered. Polar residues-rich tracts occupy residues 89–99 (SAETGSANSEM) and 121–135 (SSPS…RQQV). Positions 150 to 209 (GARKKLRLSKEQSSFLEDSFKEHSTLTPKQKSDLANRLNLRPRQVEVWFQNRRARTKLKQ) form a DNA-binding region, homeobox. Residues 167–183 (DSFKEHSTLTPKQKSDL) are compositionally biased toward basic and acidic residues. The segment at 208-252 (KQTEVDCEHLKRCCERLTRENRRLQREVAELRGTLRTTTSSYPPL) is leucine-zipper.

Belongs to the HD-ZIP homeobox family. Class II subfamily. Homodimer. May form a heterodimer with HOX1, HOX2 or HOX3. As to expression, expressed in seedlings, roots, leaves, nodes, internodes, flowers and embryo.

It localises to the nucleus. Its function is as follows. Probable transcription factor that binds to the DNA sequence 5'-CAAT[GC]ATTG-3'. The sequence is that of Homeobox-leucine zipper protein HOX7 (HOX7) from Oryza sativa subsp. japonica (Rice).